The chain runs to 64 residues: SPbeta prophage-derived uncharacterized protein YopV (64 aa).

In Bacillus subtilis (strain 168), this protein is SPbeta prophage-derived uncharacterized protein YopV (yopV).